We begin with the raw amino-acid sequence, 372 residues long: tRNA-specific 2-thiouridylase MnmA (372 aa).

Residues 16 to 23 (GMSGGVDS) and Met42 contribute to the ATP site. The tract at residues 102-104 (NPD) is interaction with target base in tRNA. The active-site Nucleophile is Cys107. Cysteines 107 and 205 form a disulfide. Position 132 (Gly132) interacts with ATP. The interaction with tRNA stretch occupies residues 155 to 157 (KDQ). Cys205 functions as the Cysteine persulfide intermediate in the catalytic mechanism. The interval 317–318 (RY) is interaction with tRNA.

This sequence belongs to the MnmA/TRMU family.

The protein localises to the cytoplasm. The catalysed reaction is S-sulfanyl-L-cysteinyl-[protein] + uridine(34) in tRNA + AH2 + ATP = 2-thiouridine(34) in tRNA + L-cysteinyl-[protein] + A + AMP + diphosphate + H(+). Functionally, catalyzes the 2-thiolation of uridine at the wobble position (U34) of tRNA, leading to the formation of s(2)U34. This Shewanella oneidensis (strain ATCC 700550 / JCM 31522 / CIP 106686 / LMG 19005 / NCIMB 14063 / MR-1) protein is tRNA-specific 2-thiouridylase MnmA.